Consider the following 201-residue polypeptide: MEKFTTLEGVAAPMRIINIDTDRIIPKQYLKTIKRTGLGQGLFSEMRYNDDGSENPDFVLNQPAYRHAKTLVVGDNFGCGSSREHAPWALADFGIRCVISTSFADIFFNNCAKNGILAIVVSPEDLEKLFQDAERGANATLTIDLAAQTIKGPDGGTLHFDIDEGRKHNLLNGLDEIGLTLDQKAPAIDAYEAKLAQREWA.

It belongs to the LeuD family. LeuD type 1 subfamily. In terms of assembly, heterodimer of LeuC and LeuD.

The enzyme catalyses (2R,3S)-3-isopropylmalate = (2S)-2-isopropylmalate. It functions in the pathway amino-acid biosynthesis; L-leucine biosynthesis; L-leucine from 3-methyl-2-oxobutanoate: step 2/4. Functionally, catalyzes the isomerization between 2-isopropylmalate and 3-isopropylmalate, via the formation of 2-isopropylmaleate. This is 3-isopropylmalate dehydratase small subunit from Methylorubrum extorquens (strain CM4 / NCIMB 13688) (Methylobacterium extorquens).